A 157-amino-acid polypeptide reads, in one-letter code: Protein Smg (157 aa).

This sequence belongs to the Smg family.

The sequence is that of Protein Smg from Buchnera aphidicola subsp. Schizaphis graminum (strain Sg).